The sequence spans 585 residues: MNLFTDFEARIKTALEQIDLVREKRSELDFGRIAVEPPRDASHGDVATNAAMVLAKPLGTNPRALADIIIAKLREDADVADVSVAGPGFINIRLAVGYWQRLLAAMIGAGTDYGRSTLGEGRKVNVEYVSANPTGPMHVGHCRGAVVGDALANLLAFAGYGVEKEYYINDAGSQIDVLARSVFLRYREALGEKIGEIPSGLYPGDYLVPVGQSLAADYGVRLHNMPEDQWMPIVKDRTIDAMMVMIREDLASLNVHHDIFFSERTLHANGAAAIRTAINDLTFKGYVYKGTLPPPKGQLPEDWEDREQTLFRSTEVGDDMDRPLIKSDGSYTYFAADVAYFKNKFDRGFDEMIYVLGADHGGYVKRLEAVARGVSDGKAKLTVLLCQLVKLYRNGEPVKMSKRSGDFVTLRDVVEEVGSDSVRFMMLYRKNSEPLDFDFAKVTEQSKDNPVFYVQYAHARCMSVFRQAREAFGDLDVSPEEFAQTVAGIGDPAELQLVAKLAEFPRIVEAAAQSQEPHRLAFYLYDLASSFHAHWNKGKDQPELRFVNDKNRESTIARLGLVYAVASVLKSGLAITGTAAPDEMR.

The short motif at 131 to 141 is the 'HIGH' region element; it reads ANPTGPMHVGH.

The protein belongs to the class-I aminoacyl-tRNA synthetase family. Monomer.

The protein localises to the cytoplasm. The catalysed reaction is tRNA(Arg) + L-arginine + ATP = L-arginyl-tRNA(Arg) + AMP + diphosphate. In Rhizobium leguminosarum bv. trifolii (strain WSM2304), this protein is Arginine--tRNA ligase.